Consider the following 675-residue polypeptide: Probable metal-nicotianamine transporter YSL16 (675 aa).

Over residues 1-11 (MDRHALGGGGA) the composition is skewed to gly residues. Positions 1–20 (MDRHALGGGGALEIEKTPEA) are disordered. 14 helical membrane passes run 50–70 (GMVAALLIGVVYTVIVMKLSL), 73–93 (GLIPTLNVSAALLAFLALRGW), 118–138 (CAVACYTIGYGGGFGSFLLGL), 162–182 (GIGWMTGFLLSTSFVGLLTLL), 231–251 (ISFLWSFFQWFYTGGDVCGFL), 283–303 (LVNLSLLFGAILSWGIMWPLI), 329–349 (FICIALLVGDGFYNFVKVIVV), 393–413 (MAYTGYTLLSVIAVVLIPVMF), 421–441 (VIIAYLLAPALGFCNAYGTGL), 453–473 (IALFIFAAWAGKDDGVVAGLV), 507–527 (VGQVVGTLMGCVVAPLTFFLF), 567–587 (LQLCAGFFAFAVLANLARDFL), 605–625 (FLVGASFAIDMCAGSLVVFLW), and 633–653 (AALLVPAVASGLICGDGIWTF).

Belongs to the YSL (TC 2.A.67.2) family. As to expression, expressed in roots.

Its subcellular location is the membrane. In terms of biological role, may be involved in the transport of nicotianamine-chelated metals. This chain is Probable metal-nicotianamine transporter YSL16 (YSL16), found in Oryza sativa subsp. japonica (Rice).